An 81-amino-acid polypeptide reads, in one-letter code: Three-finger toxin MALT0051C (81 aa).

The signal sequence occupies residues 1–21; that stretch reads MKTLLLTLVVVTVVCLDFGHT. Intrachain disulfides connect C24/C43, C38/C60, C62/C73, and C74/C79.

The protein belongs to the three-finger toxin family. Short-chain subfamily. Type I alpha-neurotoxin sub-subfamily. Expressed by the venom gland.

The protein resides in the secreted. Functionally, binds to muscle nicotinic acetylcholine receptor (nAChR) and inhibit acetylcholine from binding to the receptor, thereby impairing neuromuscular transmission. This chain is Three-finger toxin MALT0051C, found in Micrurus altirostris (Uruguayan coral snake).